Reading from the N-terminus, the 360-residue chain is Photosystem II protein D1 (360 aa).

Transmembrane regions (helical) follow at residues 29 to 46, 118 to 133, and 142 to 156; these read YIGW…TATS, HFLL…EWEL, and WIFV…AASA. Chlorophyll a is bound at residue histidine 118. Tyrosine 126 contributes to the pheophytin a binding site. Positions 170 and 189 each coordinate [CaMn4O5] cluster. The chain crosses the membrane as a helical span at residues 197-218; the sequence is FHMAGVAGVFGGSLFSAMHGSL. Histidine 198 serves as a coordination point for chlorophyll a. A quinone-binding positions include histidine 215 and 264–265; that span reads SF. Histidine 215 is a binding site for Fe cation. Histidine 272 provides a ligand contact to Fe cation. A helical membrane pass occupies residues 274–288; that stretch reads FLAAWPVVGIWLTAL. [CaMn4O5] cluster contacts are provided by histidine 332, glutamate 333, aspartate 342, and alanine 344. The propeptide occupies 345 to 360; the sequence is SNEVLPVAVNAPAVNG.

It belongs to the reaction center PufL/M/PsbA/D family. As to quaternary structure, PSII is composed of 1 copy each of membrane proteins PsbA, PsbB, PsbC, PsbD, PsbE, PsbF, PsbH, PsbI, PsbJ, PsbK, PsbL, PsbM, PsbT, PsbX, PsbY, PsbZ, Psb30/Ycf12, at least 3 peripheral proteins of the oxygen-evolving complex and a large number of cofactors. It forms dimeric complexes. Requires The D1/D2 heterodimer binds P680, chlorophylls that are the primary electron donor of PSII, and subsequent electron acceptors. It shares a non-heme iron and each subunit binds pheophytin, quinone, additional chlorophylls, carotenoids and lipids. D1 provides most of the ligands for the Mn4-Ca-O5 cluster of the oxygen-evolving complex (OEC). There is also a Cl(-1) ion associated with D1 and D2, which is required for oxygen evolution. The PSII complex binds additional chlorophylls, carotenoids and specific lipids. as cofactor. In terms of processing, tyr-161 forms a radical intermediate that is referred to as redox-active TyrZ, YZ or Y-Z. C-terminally processed by CTPA; processing is essential to allow assembly of the oxygen-evolving complex and thus photosynthetic growth.

The protein resides in the plastid. Its subcellular location is the chloroplast thylakoid membrane. It catalyses the reaction 2 a plastoquinone + 4 hnu + 2 H2O = 2 a plastoquinol + O2. Its function is as follows. Photosystem II (PSII) is a light-driven water:plastoquinone oxidoreductase that uses light energy to abstract electrons from H(2)O, generating O(2) and a proton gradient subsequently used for ATP formation. It consists of a core antenna complex that captures photons, and an electron transfer chain that converts photonic excitation into a charge separation. The D1/D2 (PsbA/PsbD) reaction center heterodimer binds P680, the primary electron donor of PSII as well as several subsequent electron acceptors. The chain is Photosystem II protein D1 from Heterosigma akashiwo (Chromophytic alga).